The chain runs to 196 residues: Orotate phosphoribosyltransferase (196 aa).

5-phospho-alpha-D-ribose 1-diphosphate is bound by residues Arg102, Lys103, Lys106, His108, and 129–137 (EDVVTTGGS). Thr133 and Arg161 together coordinate orotate.

Belongs to the purine/pyrimidine phosphoribosyltransferase family. PyrE subfamily. Homodimer. Requires Mg(2+) as cofactor.

It carries out the reaction orotidine 5'-phosphate + diphosphate = orotate + 5-phospho-alpha-D-ribose 1-diphosphate. It functions in the pathway pyrimidine metabolism; UMP biosynthesis via de novo pathway; UMP from orotate: step 1/2. In terms of biological role, catalyzes the transfer of a ribosyl phosphate group from 5-phosphoribose 1-diphosphate to orotate, leading to the formation of orotidine monophosphate (OMP). The polypeptide is Orotate phosphoribosyltransferase (Prochlorococcus marinus (strain MIT 9303)).